Consider the following 724-residue polypeptide: Membrane protein YdfJ (724 aa).

The next 12 helical transmembrane spans lie at isoleucine 17–leucine 37, isoleucine 179–alanine 199, glycine 200–glycine 220, leucine 231–threonine 251, alanine 277–isoleucine 297, leucine 309–alanine 329, isoleucine 360–leucine 380, alanine 512–phenylalanine 532, leucine 539–valine 559, glycine 575–aspartate 595, proline 627–glycine 647, and glycine 655–proline 675.

Belongs to the resistance-nodulation-cell division (RND) (TC 2.A.6) family. MmpL subfamily.

It is found in the cell membrane. The chain is Membrane protein YdfJ (ydfJ) from Bacillus subtilis (strain 168).